The chain runs to 146 residues: Ribonuclease H (146 aa).

The RNase H type-1 domain maps to 1 to 143 (MEKKVTIYTD…CDELARLAVR (143 aa)). The Mg(2+) site is built by Asp-10, Glu-48, Asp-70, and Asp-135.

The protein belongs to the RNase H family. As to quaternary structure, monomer. The cofactor is Mg(2+).

It is found in the cytoplasm. The enzyme catalyses Endonucleolytic cleavage to 5'-phosphomonoester.. In terms of biological role, endonuclease that specifically degrades the RNA of RNA-DNA hybrids. The chain is Ribonuclease H from Chlorobium phaeovibrioides (strain DSM 265 / 1930) (Prosthecochloris vibrioformis (strain DSM 265)).